Here is a 341-residue protein sequence, read N- to C-terminus: Inositol monophosphatase 3 (341 aa).

The helical transmembrane segment at 11–31 threads the bilayer; that stretch reads LGIAVFCLLGVGVIYHLYAGV. Mg(2+) is bound by residues Glu117, Asp157, Leu159, Asp160, and Asp283. Position 117 (Glu117) interacts with substrate. Residues 159–162 and Asp283 contribute to the substrate site; that span reads LDAT.

The protein belongs to the inositol monophosphatase superfamily. Mg(2+) is required as a cofactor.

The protein resides in the membrane. It catalyses the reaction a myo-inositol phosphate + H2O = myo-inositol + phosphate. It functions in the pathway polyol metabolism; myo-inositol biosynthesis; myo-inositol from D-glucose 6-phosphate: step 2/2. The chain is Inositol monophosphatase 3 (bpnt2) from Danio rerio (Zebrafish).